A 1023-amino-acid polypeptide reads, in one-letter code: Sodium/potassium-transporting ATPase subunit alpha-1 (1023 aa).

Positions 1–5 (MGYGA) are excised as a propeptide. Residues 1–11 (MGYGAGRDKYE) show a composition bias toward basic and acidic residues. Residues 1–34 (MGYGAGRDKYEPAATSEHGGKKGKGKGKDRDMEE) form a disordered region. The Cytoplasmic segment spans residues 6–87 (GRDKYEPAAT…NALTPPPTTP (82 aa)). At Thr15 the chain carries Phosphothreonine; by PKC. The residue at position 16 (Ser16) is a Phosphoserine; by PKC. The tract at residues 82 to 84 (PPP) is interaction with phosphoinositide-3 kinase. Residues 88–108 (EWVKFCRQLFGGFSMLLWIGA) traverse the membrane as a helical segment. The Extracellular segment spans residues 109–131 (ILCFLAYGIRKASDLEPDNDNLY). Residues 132-152 (LGVVLSAVVIITGCFSYYQEA) form a helical membrane-spanning segment. The Cytoplasmic segment spans residues 153-288 (KSSRIMESFK…GGQTPIAVEI (136 aa)). The interval 215–235 (NSSLTGESEPQTRSPDFTNEN) is disordered. A helical transmembrane segment spans residues 289–308 (GHFIHIITGVAVFLGVSFFI). At 309–320 (LSLILHYTWLEA) the chain is on the extracellular side. The helical transmembrane segment at 321–338 (VIFLIGIIVANVPEGLLA) threads the bilayer. At 339-772 (TVTVCLTLTA…EEGRLIFDNL (434 aa)) the chain is on the cytoplasmic side. Catalysis depends on Asp376, which acts as the 4-aspartylphosphate intermediate. Position 487 (Lys487) interacts with ATP. Mg(2+) contacts are provided by Asp717 and Asp721. Residues 773-792 (KKSIAYTLTSNIPEITPFLI) traverse the membrane as a helical segment. Residues 793-802 (FIIADIPLPL) are Extracellular-facing. Residues 803-823 (GTVTILCIDLGTDMVPAISLA) traverse the membrane as a helical segment. Topologically, residues 824–843 (YEQAESDIMKRQPRNPKKDK) are cytoplasmic. The helical transmembrane segment at 844 to 866 (LVNERLISMAYGQIGMIQALGGF) threads the bilayer. Residues 867–918 (FAYFVILAENGFLPSTLLGIRVAWEDRYVNDVEDSYGQQWTYEQRKIVEFTC) lie on the Extracellular side of the membrane. Residues 919-938 (HTAFFVSIVVVQWADLIICK) traverse the membrane as a helical segment. Over 939-951 (TRRNSVFQQGMKN) the chain is Cytoplasmic. Position 943 is a phosphoserine; by PKA (Ser943). A helical transmembrane segment spans residues 952 to 970 (KILIFGLFEETALAAFLSY). Over 971–985 (CPGMDVALRMYPLKP) the chain is Extracellular. Residues 986–1006 (TWWFCAFPYSLLIFIYDEVRK) form a helical membrane-spanning segment. Residues 1007 to 1023 (LILRRSPGGWVEKETYY) are Cytoplasmic-facing.

It belongs to the cation transport ATPase (P-type) (TC 3.A.3) family. Type IIC subfamily. As to quaternary structure, the sodium/potassium-transporting ATPase is composed of a catalytic alpha subunit, an auxiliary non-catalytic beta subunit and an additional regulatory subunit. Mainly expressed in kidney. Found in bladder, colon, eye, and testis. Found in low levels in brain, heart, spleen and liver.

It is found in the cell membrane. It localises to the sarcolemma. It catalyses the reaction K(+)(out) + Na(+)(in) + ATP + H2O = K(+)(in) + Na(+)(out) + ADP + phosphate + H(+). This alpha subunit is resistant to ouabain. In terms of biological role, this is the catalytic component of the active enzyme, which catalyzes the hydrolysis of ATP coupled with the exchange of sodium and potassium ions across the plasma membrane. This action creates the electrochemical gradient of sodium and potassium ions, providing the energy for active transport of various nutrients. This chain is Sodium/potassium-transporting ATPase subunit alpha-1 (ATP1A1), found in Rhinella marina (Cane toad).